The primary structure comprises 85 residues: Small ribosomal subunit protein bS16 (85 aa).

Belongs to the bacterial ribosomal protein bS16 family.

This chain is Small ribosomal subunit protein bS16, found in Acinetobacter baylyi (strain ATCC 33305 / BD413 / ADP1).